The primary structure comprises 91 residues: Small ribosomal subunit protein uS19 (91 aa).

It belongs to the universal ribosomal protein uS19 family.

In terms of biological role, protein S19 forms a complex with S13 that binds strongly to the 16S ribosomal RNA. In Exiguobacterium sp. (strain ATCC BAA-1283 / AT1b), this protein is Small ribosomal subunit protein uS19.